The primary structure comprises 230 residues: Fibrillarin-like rRNA/tRNA 2'-O-methyltransferase (230 aa).

S-adenosyl-L-methionine-binding positions include 89–90 (TT), 107–108 (EV), 132–133 (DA), and 152–155 (DISQ).

It belongs to the methyltransferase superfamily. Fibrillarin family. As to quaternary structure, interacts with nop5. Component of box C/D small ribonucleoprotein (sRNP) particles that contain rpl7ae, FlpA and nop5, plus a guide RNA.

In terms of biological role, involved in pre-rRNA and tRNA processing. Utilizes the methyl donor S-adenosyl-L-methionine to catalyze the site-specific 2'-hydroxyl methylation of ribose moieties in rRNA and tRNA. Site specificity is provided by a guide RNA that base pairs with the substrate. Methylation occurs at a characteristic distance from the sequence involved in base pairing with the guide RNA. This chain is Fibrillarin-like rRNA/tRNA 2'-O-methyltransferase, found in Thermoplasma acidophilum (strain ATCC 25905 / DSM 1728 / JCM 9062 / NBRC 15155 / AMRC-C165).